Here is a 399-residue protein sequence, read N- to C-terminus: Oligoribonuclease NrnB (399 aa).

Requires Mn(2+) as cofactor. Co(2+) is required as a cofactor. The cofactor is Mg(2+).

It is found in the cytoplasm. Its function is as follows. Degrades RNA oligonucleotides with a length of 5 nucleotides in a 3'- to 5'-direction. Less active on shorter RNA oligonucleotides and on those with a length of 24 nucleotides. Prefers RNA oligonucleotides containing adenines rather than cytosines. The polypeptide is Oligoribonuclease NrnB (nrnB) (Bacillus subtilis (strain 168)).